A 186-amino-acid polypeptide reads, in one-letter code: Nuclear transcription factor Y subunit C-5 (186 aa).

Residues 166 to 186 (QMPGAWTEEDATGANGGNGGN) are disordered.

This sequence belongs to the NFYC/HAP5 subunit family. Heterotrimeric transcription factor composed of three components, NF-YA, NF-YB and NF-YC. NF-YB and NF-YC must interact and dimerize for NF-YA association and DNA binding. As to expression, expressed in inflorescences and flowers.

It is found in the nucleus. Its function is as follows. Stimulates the transcription of various genes by recognizing and binding to a CCAAT motif in promoters. The sequence is that of Nuclear transcription factor Y subunit C-5 (NFYC5) from Arabidopsis thaliana (Mouse-ear cress).